A 96-amino-acid polypeptide reads, in one-letter code: Putative pterin-4-alpha-carbinolamine dehydratase (96 aa).

The protein belongs to the pterin-4-alpha-carbinolamine dehydratase family.

The catalysed reaction is (4aS,6R)-4a-hydroxy-L-erythro-5,6,7,8-tetrahydrobiopterin = (6R)-L-erythro-6,7-dihydrobiopterin + H2O. The chain is Putative pterin-4-alpha-carbinolamine dehydratase from Brucella anthropi (strain ATCC 49188 / DSM 6882 / CCUG 24695 / JCM 21032 / LMG 3331 / NBRC 15819 / NCTC 12168 / Alc 37) (Ochrobactrum anthropi).